The sequence spans 250 residues: Uracil-DNA glycosylase (250 aa).

Asp-78 (proton acceptor) is an active-site residue. A disordered region spans residues 228–250; that stretch reads RGQKPVDWSGEQNNASRQGEFAL.

It belongs to the uracil-DNA glycosylase (UDG) superfamily. UNG family.

It is found in the cytoplasm. The enzyme catalyses Hydrolyzes single-stranded DNA or mismatched double-stranded DNA and polynucleotides, releasing free uracil.. In terms of biological role, excises uracil residues from the DNA which can arise as a result of misincorporation of dUMP residues by DNA polymerase or due to deamination of cytosine. This is Uracil-DNA glycosylase from Bordetella pertussis (strain Tohama I / ATCC BAA-589 / NCTC 13251).